The primary structure comprises 223 residues: Deoxyribose-phosphate aldolase (223 aa).

D89 serves as the catalytic Proton donor/acceptor. K152 (schiff-base intermediate with acetaldehyde) is an active-site residue. K181 acts as the Proton donor/acceptor in catalysis.

It belongs to the DeoC/FbaB aldolase family. DeoC type 1 subfamily.

The protein resides in the cytoplasm. It carries out the reaction 2-deoxy-D-ribose 5-phosphate = D-glyceraldehyde 3-phosphate + acetaldehyde. It functions in the pathway carbohydrate degradation; 2-deoxy-D-ribose 1-phosphate degradation; D-glyceraldehyde 3-phosphate and acetaldehyde from 2-deoxy-alpha-D-ribose 1-phosphate: step 2/2. Catalyzes a reversible aldol reaction between acetaldehyde and D-glyceraldehyde 3-phosphate to generate 2-deoxy-D-ribose 5-phosphate. This chain is Deoxyribose-phosphate aldolase, found in Bacillus cereus (strain B4264).